Here is a 24-residue protein sequence, read N- to C-terminus: Neurotoxin-2 (24 aa).

Residues 1-24 (EDGYLLNRDTGCKVSCGTCRYCND) form the LCN-type CS-alpha/beta domain.

This sequence belongs to the long (4 C-C) scorpion toxin superfamily. Sodium channel inhibitor family. Alpha subfamily. As to expression, expressed by the venom gland.

The protein resides in the secreted. Binds to sodium channels (Nav) and inhibits the inactivation of the activated channels, thereby blocking neuronal transmission. This toxin is active against mammals. This chain is Neurotoxin-2, found in Hottentotta tamulus (Eastern Indian scorpion).